The sequence spans 901 residues: Pantothenate kinase 2 (901 aa).

Residues Met1–Pro10 show a composition bias toward acidic residues. Positions Met1 to Leu50 are disordered. The tract at residues Met1–Trp466 is pantothenate kinase. Residues Met467 to Leu901 are 4'-phosphopantetheine phosphatase. Mn(2+)-binding residues include Asp731, Asn732, and Asp767. Residues Glu851–Arg855 carry the Subfamily II EGMGR motif motif.

The protein in the N-terminal section; belongs to the type II pantothenate kinase family. It in the C-terminal section; belongs to the damage-control phosphatase family. Phosphopantetheine phosphatase II subfamily. Mn(2+) serves as cofactor. Ni(2+) is required as a cofactor. As to expression, highly expressed in leaves and developing seeds. Expressed in roots, stems and flowers.

The enzyme catalyses (R)-pantothenate + ATP = (R)-4'-phosphopantothenate + ADP + H(+). The catalysed reaction is (R)-4'-phosphopantothenate + H2O = (R)-pantothenate + phosphate. It carries out the reaction (R)-4'-phosphopantetheine + H2O = (R)-pantetheine + phosphate. It catalyses the reaction (R)-4'-phosphopantetheine sulfonate + H2O = (R)-pantetheine sulfonate + phosphate. It participates in cofactor biosynthesis; coenzyme A biosynthesis; CoA from (R)-pantothenate: step 1/5. Its activity is regulated as follows. Activity is strongly promoted by Co(2+), Ni(2+) and Mn(2+). Activity is inhibited by EDTA. Its function is as follows. Catalyzes the phosphorylation of pantothenate the first step in CoA biosynthesis. May play a role in the physiological regulation of the intracellular CoA concentration. Functionally redudant with PANK1. The phosphatase activity shows preference for normal or oxidatively damaged intermediates of 4'-phosphopantetheine, which provides strong indirect evidence that the phosphatase activity pre-empts damage in the CoA pathway. Hydrolyzing excess 4'-phosphopantetheine could constitute a directed overflow mechanism to prevent its oxidation to the S-sulfonate, sulfonate, or other forms. Hydrolyzing 4'-phosphopantetheine sulfonate or S-sulfonate would forestall their conversion to inactive forms of CoA and acyl carrier protein. This is Pantothenate kinase 2 (PANK2) from Arabidopsis thaliana (Mouse-ear cress).